We begin with the raw amino-acid sequence, 878 residues long: Phosphoenolpyruvate carboxylase (878 aa).

Residues histidine 137 and lysine 545 contribute to the active site.

This sequence belongs to the PEPCase type 1 family. Mg(2+) serves as cofactor.

It carries out the reaction oxaloacetate + phosphate = phosphoenolpyruvate + hydrogencarbonate. Its function is as follows. Forms oxaloacetate, a four-carbon dicarboxylic acid source for the tricarboxylic acid cycle. This Yersinia pestis bv. Antiqua (strain Antiqua) protein is Phosphoenolpyruvate carboxylase.